A 506-amino-acid chain; its full sequence is Maturase K (506 aa).

This sequence belongs to the intron maturase 2 family. MatK subfamily.

The protein resides in the plastid. The protein localises to the chloroplast. Its function is as follows. Usually encoded in the trnK tRNA gene intron. Probably assists in splicing its own and other chloroplast group II introns. The sequence is that of Maturase K from Trifolium resupinatum (Persian clover).